The following is a 657-amino-acid chain: Methionine--tRNA ligase (657 aa).

Residues 13–23 (YYPSGNLHIGH) carry the 'HIGH' region motif. The 'KMSKS' region signature appears at 308–312 (KMSKS). K311 provides a ligand contact to ATP. The tRNA-binding domain maps to 557–657 (DFDKVEIKAA…SAIPNGAVIK (101 aa)).

The protein belongs to the class-I aminoacyl-tRNA synthetase family. MetG type 2B subfamily. In terms of assembly, homodimer.

Its subcellular location is the cytoplasm. The catalysed reaction is tRNA(Met) + L-methionine + ATP = L-methionyl-tRNA(Met) + AMP + diphosphate. Functionally, is required not only for elongation of protein synthesis but also for the initiation of all mRNA translation through initiator tRNA(fMet) aminoacylation. This chain is Methionine--tRNA ligase, found in Staphylococcus aureus (strain MW2).